A 259-amino-acid polypeptide reads, in one-letter code: Cobalt transport protein CbiM (259 aa).

Positions 1–25 (MFRRTTWLTLYLLLAMAALARPAFA) are cleaved as a signal peptide. A run of 6 helical transmembrane segments spans residues 31-51 (GFLPFNWAAFWFIVVLPFWIW), 68-88 (MLLGLAGAYTFVLSALKLPSV), 100-120 (LGAVLFGPAAMSILGGIVLLF), 132-152 (TLGANTFSMAVVGPFVAYGLY), 160-180 (GSMPLAVFLAATLGDLMTYVT), and 206-226 (IFAVTQLPLAISEGFLTVIVF).

Belongs to the CbiM family. As to quaternary structure, forms an energy-coupling factor (ECF) transporter complex composed of an ATP-binding protein (A component, CbiO), a transmembrane protein (T component, CbiQ) and 2 possible substrate-capture proteins (S components, CbiM and CbiN) of unknown stoichimetry.

Its subcellular location is the cell membrane. Its pathway is cofactor biosynthesis; adenosylcobalamin biosynthesis. Its function is as follows. Part of the energy-coupling factor (ECF) transporter complex CbiMNOQ involved in cobalt import. This chain is Cobalt transport protein CbiM, found in Moorella thermoacetica (strain ATCC 39073 / JCM 9320).